A 297-amino-acid chain; its full sequence is 4-hydroxy-tetrahydrodipicolinate synthase (297 aa).

Pyruvate is bound at residue Thr47. Tyr136 serves as the catalytic Proton donor/acceptor. The active-site Schiff-base intermediate with substrate is Lys165. A pyruvate-binding site is contributed by Ile206.

This sequence belongs to the DapA family. In terms of assembly, homotetramer; dimer of dimers.

The protein resides in the cytoplasm. It catalyses the reaction L-aspartate 4-semialdehyde + pyruvate = (2S,4S)-4-hydroxy-2,3,4,5-tetrahydrodipicolinate + H2O + H(+). The protein operates within amino-acid biosynthesis; L-lysine biosynthesis via DAP pathway; (S)-tetrahydrodipicolinate from L-aspartate: step 3/4. Catalyzes the condensation of (S)-aspartate-beta-semialdehyde [(S)-ASA] and pyruvate to 4-hydroxy-tetrahydrodipicolinate (HTPA). This chain is 4-hydroxy-tetrahydrodipicolinate synthase, found in Campylobacter curvus (strain 525.92).